Consider the following 51-residue polypeptide: Large ribosomal subunit protein eL39 (51 aa).

This sequence belongs to the eukaryotic ribosomal protein eL39 family.

The protein is Large ribosomal subunit protein eL39 of Hyperthermus butylicus (strain DSM 5456 / JCM 9403 / PLM1-5).